We begin with the raw amino-acid sequence, 204 residues long: dTTP/UTP pyrophosphatase (204 aa).

Asp76 (proton acceptor) is an active-site residue.

It belongs to the Maf family. YhdE subfamily. A divalent metal cation is required as a cofactor.

It localises to the cytoplasm. The enzyme catalyses dTTP + H2O = dTMP + diphosphate + H(+). It catalyses the reaction UTP + H2O = UMP + diphosphate + H(+). Its function is as follows. Nucleoside triphosphate pyrophosphatase that hydrolyzes dTTP and UTP. May have a dual role in cell division arrest and in preventing the incorporation of modified nucleotides into cellular nucleic acids. This chain is dTTP/UTP pyrophosphatase, found in Salinibacter ruber (strain DSM 13855 / M31).